The chain runs to 329 residues: Gamma-resorcylate decarboxylase (329 aa).

Zn(2+) contacts are provided by glutamate 8, histidine 10, histidine 167, and aspartate 290. Aspartate 290 is a catalytic residue.

It belongs to the metallo-dependent hydrolases superfamily. ACMSD family. Zn(2+) serves as cofactor.

The catalysed reaction is 2,6-dihydroxybenzoate + H(+) = resorcinol + CO2. It functions in the pathway aromatic compound metabolism. Involved in the gamma-resorcylate (2,6-dihydroxybenzoate) catabolism. Catalyzes the reversible decarboxylation of gamma-resorcylate to resorcinol. The sequence is that of Gamma-resorcylate decarboxylase from Rhodococcus jostii (strain RHA1).